The following is a 59-amino-acid chain: Arabinogalactan protein 13 (59 aa).

The N-terminal stretch at 1–27 (MEAMKMRLFVAVLVAAMAFSAVQQAAA) is a signal peptide. Residues Pro31, Pro33, and Pro35 each carry the 4-hydroxyproline modification. Pro31, Pro33, and Pro35 each carry an O-linked (Ara...) hydroxyproline glycan. The GPI-anchor amidated serine moiety is linked to residue Ser37. Positions 38 to 59 (DASLAIPAFFASVATLAFGFLF) are cleaved as a propeptide — removed in mature form.

It belongs to the AG-peptide AGP family. In terms of processing, contains 4-hydroxyproline; hydroxylated on Pro-31, Pro-33 and Pro-35. O-glycosylated on hydroxyprolines; noncontiguous hydroxylproline residues are glycosylated with arabinogalactan.

It is found in the cell membrane. Proteoglycan that seems to be implicated in diverse developmental roles such as differentiation, cell-cell recognition, embryogenesis and programmed cell death. The chain is Arabinogalactan protein 13 from Arabidopsis thaliana (Mouse-ear cress).